The primary structure comprises 100 residues: MARKSLIQRDKKRKKLEQKYHLIRRSSKQEIHKVSLLSEKREFYVKLQSSPRNSAPTRLRRRCFVTGRPRANYRDFELSGHILREMVEACLLPGAIRSSW.

Belongs to the universal ribosomal protein uS14 family. In terms of assembly, part of the 30S ribosomal subunit.

It is found in the plastid. Its function is as follows. Binds 16S rRNA, required for the assembly of 30S particles. The polypeptide is Small ribosomal subunit protein uS14c (Cuscuta obtusiflora (Peruvian dodder)).